The primary structure comprises 465 residues: Protein maelstrom (465 aa).

A DNA-binding region (HMG box) is located at residues 2–69 (APKKHSGFMM…ADRGKRERLN (68 aa)). The tract at residues 415-440 (MRKSSKHTGPSVSTQRERNAGAWNLP) is disordered.

This sequence belongs to the maelstrom family.

Its subcellular location is the cytoplasm. It is found in the nucleus. Its function is as follows. Involved both in the piRNA and miRNA metabolic processes. As a component of the meiotic nuage, plays a central role during oogenesis by repressing transposable elements and preventing their mobilization, which is essential for the germline integrity. Repression of transposable elements is mediated via the piRNA metabolic process, which mediates the repression of transposable elements during meiosis by forming complexes composed of piRNAs and Piwi proteins and governs the repression of transposons. As a nuclear component, it is required for proper differentiation in the germline stem cell (GSC) lineage by repressing microRNA-7 (miR-7), thereby acting as an indirect regulator of bag-of-marbles (Bam). Acts by binding to the promoter of miR-7 gene and repressing its expression; miR-7 repression alleviates the Bam repression by miR-7, thereby allowing differentiation in the germline stem cell (GSC) lineage. In Drosophila yakuba (Fruit fly), this protein is Protein maelstrom (mael).